Here is a 353-residue protein sequence, read N- to C-terminus: UPF0283 membrane protein CKO_01392 (353 aa).

The next 3 membrane-spanning stretches (helical) occupy residues 70 to 90, 99 to 119, and 213 to 233; these read MVMGGLALFGVSVVGQGVQWT, WVALGGCAAGALIIGAGVGSV, and ESTLMIAVSPLALVDMAFIAW.

This sequence belongs to the UPF0283 family.

It localises to the cell inner membrane. This is UPF0283 membrane protein CKO_01392 from Citrobacter koseri (strain ATCC BAA-895 / CDC 4225-83 / SGSC4696).